Here is a 397-residue protein sequence, read N- to C-terminus: Formate-dependent phosphoribosylglycinamide formyltransferase (397 aa).

N(1)-(5-phospho-beta-D-ribosyl)glycinamide-binding positions include 21-22 (EL) and glutamate 81. ATP-binding positions include arginine 113, lysine 154, 194–197 (EEFV), and glutamate 202. The ATP-grasp domain maps to 118–312 (RFAAEKLKLP…EFQIHVRSAI (195 aa)). The Mg(2+) site is built by glutamate 271 and glutamate 283. Residues aspartate 290, lysine 361, and 368–369 (RR) contribute to the N(1)-(5-phospho-beta-D-ribosyl)glycinamide site.

Belongs to the PurK/PurT family. Homodimer.

It catalyses the reaction N(1)-(5-phospho-beta-D-ribosyl)glycinamide + formate + ATP = N(2)-formyl-N(1)-(5-phospho-beta-D-ribosyl)glycinamide + ADP + phosphate + H(+). The protein operates within purine metabolism; IMP biosynthesis via de novo pathway; N(2)-formyl-N(1)-(5-phospho-D-ribosyl)glycinamide from N(1)-(5-phospho-D-ribosyl)glycinamide (formate route): step 1/1. Involved in the de novo purine biosynthesis. Catalyzes the transfer of formate to 5-phospho-ribosyl-glycinamide (GAR), producing 5-phospho-ribosyl-N-formylglycinamide (FGAR). Formate is provided by PurU via hydrolysis of 10-formyl-tetrahydrofolate. In Saccharolobus solfataricus (strain ATCC 35092 / DSM 1617 / JCM 11322 / P2) (Sulfolobus solfataricus), this protein is Formate-dependent phosphoribosylglycinamide formyltransferase.